Consider the following 109-residue polypeptide: Phosphoribosyl-ATP pyrophosphatase (109 aa).

Belongs to the PRA-PH family.

It is found in the cytoplasm. It carries out the reaction 1-(5-phospho-beta-D-ribosyl)-ATP + H2O = 1-(5-phospho-beta-D-ribosyl)-5'-AMP + diphosphate + H(+). It participates in amino-acid biosynthesis; L-histidine biosynthesis; L-histidine from 5-phospho-alpha-D-ribose 1-diphosphate: step 2/9. The polypeptide is Phosphoribosyl-ATP pyrophosphatase (Geobacter metallireducens (strain ATCC 53774 / DSM 7210 / GS-15)).